A 309-amino-acid chain; its full sequence is Probable cell wall protein PGA50 (309 aa).

A signal peptide spans Met1 to Ala17. N-linked (GlcNAc...) asparagine glycosylation is found at Asn67, Asn115, Asn248, Asn267, and Asn277. Residues Ser241–Ile281 are disordered. The GPI-anchor amidated serine moiety is linked to residue Ser286. The propeptide at Thr287–Cys309 is removed in mature form.

It belongs to the IHD1 family. The GPI-anchor is attached to the protein in the endoplasmic reticulum and serves to target the protein to the cell surface. There, the glucosamine-inositol phospholipid moiety is cleaved off and the GPI-modified mannoprotein is covalently attached via its lipidless GPI glycan remnant to the 1,6-beta-glucan of the outer cell wall layer.

It is found in the secreted. The protein localises to the cell wall. It localises to the membrane. Probable GPI-anchored cell wall protein that may be involved in cell wall organization, hyphal growth, as well as in virulence. The chain is Probable cell wall protein PGA50 (PGA50) from Candida albicans (strain SC5314 / ATCC MYA-2876) (Yeast).